We begin with the raw amino-acid sequence, 308 residues long: Acetyl-coenzyme A carboxylase carboxyl transferase subunit beta 1 (308 aa).

In terms of domain architecture, CoA carboxyltransferase N-terminal spans 25–294 (VWTKCTSCEQ…PMVVSVNESP (270 aa)). Cys29, Cys32, Cys48, and Cys51 together coordinate Zn(2+). The segment at 29-51 (CTSCEQVLYHAELERNLEVCPKC) adopts a C4-type zinc-finger fold. Residues 289–308 (SVNESPNEEPYSVPEADEKG) form a disordered region.

This sequence belongs to the AccD/PCCB family. In terms of assembly, acetyl-CoA carboxylase is a heterohexamer composed of biotin carboxyl carrier protein (AccB), biotin carboxylase (AccC) and two subunits each of ACCase subunit alpha (AccA) and ACCase subunit beta (AccD). The cofactor is Zn(2+).

The protein localises to the cytoplasm. The enzyme catalyses N(6)-carboxybiotinyl-L-lysyl-[protein] + acetyl-CoA = N(6)-biotinyl-L-lysyl-[protein] + malonyl-CoA. It functions in the pathway lipid metabolism; malonyl-CoA biosynthesis; malonyl-CoA from acetyl-CoA: step 1/1. Component of the acetyl coenzyme A carboxylase (ACC) complex. Biotin carboxylase (BC) catalyzes the carboxylation of biotin on its carrier protein (BCCP) and then the CO(2) group is transferred by the transcarboxylase to acetyl-CoA to form malonyl-CoA. This is Acetyl-coenzyme A carboxylase carboxyl transferase subunit beta 1 from Vibrio campbellii (strain ATCC BAA-1116).